Reading from the N-terminus, the 306-residue chain is tRNA dimethylallyltransferase (306 aa).

Residue G6 to S13 coordinates ATP. T8 to S13 contacts substrate.

Belongs to the IPP transferase family. As to quaternary structure, monomer. It depends on Mg(2+) as a cofactor.

The enzyme catalyses adenosine(37) in tRNA + dimethylallyl diphosphate = N(6)-dimethylallyladenosine(37) in tRNA + diphosphate. In terms of biological role, catalyzes the transfer of a dimethylallyl group onto the adenine at position 37 in tRNAs that read codons beginning with uridine, leading to the formation of N6-(dimethylallyl)adenosine (i(6)A). This is tRNA dimethylallyltransferase from Sphingopyxis alaskensis (strain DSM 13593 / LMG 18877 / RB2256) (Sphingomonas alaskensis).